A 953-amino-acid chain; its full sequence is MSTTTAIDDPAGLKTTRQRNNQPQQSEIPLPSPSISDVDSDSNKGDDHRDAHVKKAYGRTPDGTGMHTLLSPSQTHDMVSQLLDPREPKNLSDYIVLGVLALHIWLAWAVPAPYNKYLLGFAFTFWRLAYNAGIGYLLTVQSKYTLLVTWARRLRAFEQPATNPRPWLYNLLKTELETKIPKDYKMDEAPIEYNTWLAFRRIVDLILMCDFVSYCLFAIVCAHTPEDEGLGMLLGRWVGGIALVGFNLWVKLDAHRVVKDYAWYWGDFFYLIEQELTFDGVFEMAPHPMYSIGYAGYYGISMMAASYDVLFISIAAHALQFVFLAFVENPHIEKTYNPPPPRLRAESEIGSQTEADALVTKELNGNSDIPQPVHNMIGSFDLFRVTDASSLIIVACFIALTVVTPTTRTYQTLAVVNAIFWRLWYSVGLGYILKKQSEKKMYTRHFLKFGESTGEAWRQWKGLYHISMILCHVSFLTACWKMYTYPEDWSYGSVLLKHVIGVSLIALQLWTSSSIYESLGEFGWFYGDFFFESPRPPTYNSIYRFLNNPERVLGAAGFWGLALITWSKAVFVMALVSQLLMLGFISFVEKPHMQKIYGQNLRKEAGLTKFVKKSLPAPVKRWQQGVDKVLDETKHFAEDFIDAALTRLSAGSSNFVKDTTALFHKPLRLSINRIDRDLAGYDPKHYKLSVEGEQLIAPDEKATRKESADARVPKDVKTKVFQYGAPIRVKWTAPANHSKKDWVGLYLVTDNRNRDFTEVPSLGRWIPTCRGQYDTTTDEGIVSYDEKVKSEGVEGPLVQGEMVFEGDKLWWTQGVYEFRYHHHGKHNVMSISEPFEVRIPLVVKEGTELTIEEAENALLPIVRNCLDRDPEIAPETVDEPWGAHVERDGKYAERVVYAIREMFAIEFSPAVVPADGNVKKLAWRVVNGRIALAPYSMSLQSRRPPTPVADSYK.

The interval 1 to 49 (MSTTTAIDDPAGLKTTRQRNNQPQQSEIPLPSPSISDVDSDSNKGDDHR) is disordered. The Lumenal segment spans residues 1 to 93 (MSTTTAIDDP…DPREPKNLSD (93 aa)). Positions 18 to 27 (QRNNQPQQSE) are enriched in polar residues. Residues 94–114 (YIVLGVLALHIWLAWAVPAPY) traverse the membrane as a helical segment. Over 115 to 117 (NKY) the chain is Cytoplasmic. A helical membrane pass occupies residues 118–138 (LLGFAFTFWRLAYNAGIGYLL). Residues 139 to 201 (TVQSKYTLLV…EYNTWLAFRR (63 aa)) lie on the Lumenal side of the membrane. The helical transmembrane segment at 202 to 222 (IVDLILMCDFVSYCLFAIVCA) threads the bilayer. Topologically, residues 223 to 229 (HTPEDEG) are cytoplasmic. A helical membrane pass occupies residues 230 to 250 (LGMLLGRWVGGIALVGFNLWV). The Lumenal segment spans residues 251-279 (KLDAHRVVKDYAWYWGDFFYLIEQELTFD). A helical membrane pass occupies residues 280-300 (GVFEMAPHPMYSIGYAGYYGI). The Cytoplasmic portion of the chain corresponds to 301–306 (SMMAAS). The chain crosses the membrane as a helical span at residues 307 to 327 (YDVLFISIAAHALQFVFLAFV). Over 328–384 (ENPHIEKTYNPPPPRLRAESEIGSQTEADALVTKELNGNSDIPQPVHNMIGSFDLFR) the chain is Lumenal. A helical transmembrane segment spans residues 385-405 (VTDASSLIIVACFIALTVVTP). Topologically, residues 406–412 (TTRTYQT) are cytoplasmic. Residues 413 to 433 (LAVVNAIFWRLWYSVGLGYIL) form a helical membrane-spanning segment. Over 434–459 (KKQSEKKMYTRHFLKFGESTGEAWRQ) the chain is Lumenal. A helical membrane pass occupies residues 460-480 (WKGLYHISMILCHVSFLTACW). Residues 481–490 (KMYTYPEDWS) lie on the Cytoplasmic side of the membrane. The chain crosses the membrane as a helical span at residues 491-511 (YGSVLLKHVIGVSLIALQLWT). Topologically, residues 512 to 568 (SSSIYESLGEFGWFYGDFFFESPRPPTYNSIYRFLNNPERVLGAAGFWGLALITWSK) are lumenal. Residues 569 to 589 (AVFVMALVSQLLMLGFISFVE) form a helical membrane-spanning segment. At 590 to 953 (KPHMQKIYGQ…PPTPVADSYK (364 aa)) the chain is on the cytoplasmic side.

Belongs to the class VI-like SAM-binding methyltransferase superfamily. CHO2 family.

It is found in the endoplasmic reticulum membrane. It catalyses the reaction a 1,2-diacyl-sn-glycero-3-phosphoethanolamine + S-adenosyl-L-methionine = a 1,2-diacyl-sn-glycero-3-phospho-N-methylethanolamine + S-adenosyl-L-homocysteine + H(+). It functions in the pathway phospholipid metabolism; phosphatidylcholine biosynthesis. In terms of biological role, catalyzes the first step of the methylation pathway of phosphatidylcholine biosynthesis, the SAM-dependent methylation of phosphatidylethanolamine (PE) to phosphatidylmonomethylethanolamine (PMME). The polypeptide is Phosphatidylethanolamine N-methyltransferase (CHO2) (Podospora anserina (strain S / ATCC MYA-4624 / DSM 980 / FGSC 10383) (Pleurage anserina)).